A 231-amino-acid chain; its full sequence is 5'-methylthioadenosine/S-adenosylhomocysteine nucleosidase (231 aa).

Glu-12 acts as the Proton acceptor in catalysis. Substrate is bound by residues Gly-78, Val-153, and 174–175 (ME). Asp-198 serves as the catalytic Proton donor.

It belongs to the PNP/UDP phosphorylase family. MtnN subfamily.

It carries out the reaction S-adenosyl-L-homocysteine + H2O = S-(5-deoxy-D-ribos-5-yl)-L-homocysteine + adenine. The catalysed reaction is S-methyl-5'-thioadenosine + H2O = 5-(methylsulfanyl)-D-ribose + adenine. It catalyses the reaction 5'-deoxyadenosine + H2O = 5-deoxy-D-ribose + adenine. It participates in amino-acid biosynthesis; L-methionine biosynthesis via salvage pathway; S-methyl-5-thio-alpha-D-ribose 1-phosphate from S-methyl-5'-thioadenosine (hydrolase route): step 1/2. In terms of biological role, catalyzes the irreversible cleavage of the glycosidic bond in both 5'-methylthioadenosine (MTA) and S-adenosylhomocysteine (SAH/AdoHcy) to adenine and the corresponding thioribose, 5'-methylthioribose and S-ribosylhomocysteine, respectively. Also cleaves 5'-deoxyadenosine, a toxic by-product of radical S-adenosylmethionine (SAM) enzymes, into 5-deoxyribose and adenine. The chain is 5'-methylthioadenosine/S-adenosylhomocysteine nucleosidase from Vibrio cholerae serotype O1 (strain ATCC 39315 / El Tor Inaba N16961).